Consider the following 394-residue polypeptide: Phosphorylated adapter RNA export protein (394 aa).

2 stretches are compositionally biased toward acidic residues: residues 1 to 18 (MAQE…DSDS) and 65 to 77 (SSEE…DDDS). The interval 1–109 (MAQEAGDMDD…DQSSQKPPIA (109 aa)) is disordered. An N-acetylalanine modification is found at alanine 2. A necessary for interaction with CBP80 region spans residues 2 to 329 (AQEAGDMDDG…KAARKRRIQV (328 aa)). Serine 14, serine 16, serine 65, serine 66, serine 69, and serine 73 each carry phosphoserine. Residues 81-84 (KRKR) carry the Nuclear localization signal motif. A Nuclear export signal motif is present at residues 130–139 (VATELGILGM). Residues 178 to 193 (YMHGGKKTGPKEEENG) are compositionally biased toward basic and acidic residues. The tract at residues 178-208 (YMHGGKKTGPKEEENGQGHPKRKRPVKDRVG) is disordered. The Nuclear localization signal signature appears at 198-201 (KRKR). At serine 226 the chain carries Phosphoserine. Positions 228 to 328 (ERVADEISFR…KKAARKRRIQ (101 aa)) are sufficient for poly U RNA-binding. Residues 279 to 287 (GSRRRTPGG) form a necessary for poly U RNA-binding and snRNA export region. A Phosphothreonine modification is found at threonine 296. A phosphoserine mark is found at serine 356 and serine 368. Residues 365–394 (LDESQEGHGETKLDAEEAIEVDHSHDLDMF) are disordered. The segment covering 369–394 (QEGHGETKLDAEEAIEVDHSHDLDMF) has biased composition (basic and acidic residues).

This sequence belongs to the PHAX family. In terms of assembly, found in a U snRNA export complex with PHAX/RNUXA, NCBP1/CBP80, NCBP2/CBP20, RAN, XPO1 and m7G-capped RNA. Part of a precomplex with PHAX/RNUXA, NCBP1/CBP80, NCBP2/CBP20 and m7G-capped RNA. Interacts with NCBP1/CBP80. Found in a complex with snoRNA, Interacts with NCBP2/CBP20. Interacts with DDX39A; this interaction stimulates PHAX RNA binding activity. Post-translationally, phosphorylated in the nucleus. Dephosphorylated in the cytoplasm.

The protein resides in the nucleus. It is found in the nucleoplasm. The protein localises to the cajal body. Its subcellular location is the cytoplasm. A phosphoprotein adapter involved in the XPO1-mediated U snRNA export from the nucleus. Bridge components required for U snRNA export, the cap binding complex (CBC)-bound snRNA on the one hand and the GTPase Ran in its active GTP-bound form together with the export receptor XPO1 on the other. Its phosphorylation in the nucleus is required for U snRNA export complex assembly and export, while its dephosphorylation in the cytoplasm causes export complex disassembly. It is recycled back to the nucleus via the importin alpha/beta heterodimeric import receptor. The directionality of nuclear export is thought to be conferred by an asymmetric distribution of the GTP- and GDP-bound forms of Ran between the cytoplasm and nucleus. Its compartmentalized phosphorylation cycle may also contribute to the directionality of export. Binds strongly to m7G-capped U1 and U5 small nuclear RNAs (snRNAs) in a sequence-unspecific manner and phosphorylation-independent manner. Also plays a role in the biogenesis of U3 small nucleolar RNA (snoRNA). Involved in the U3 snoRNA transport from nucleoplasm to Cajal bodies. Binds strongly to m7G-capped U3, U8 and U13 precursor snoRNAs and weakly to trimethylated (TMG)-capped U3, U8 and U13 snoRNAs. Also binds to telomerase RNA. This Bos taurus (Bovine) protein is Phosphorylated adapter RNA export protein (PHAX).